We begin with the raw amino-acid sequence, 254 residues long: Ribonuclease PH (254 aa).

Residues R86 and 124–126 (GTR) contribute to the phosphate site.

This sequence belongs to the RNase PH family. In terms of assembly, homohexameric ring arranged as a trimer of dimers.

The enzyme catalyses tRNA(n+1) + phosphate = tRNA(n) + a ribonucleoside 5'-diphosphate. In terms of biological role, phosphorolytic 3'-5' exoribonuclease that plays an important role in tRNA 3'-end maturation. Removes nucleotide residues following the 3'-CCA terminus of tRNAs; can also add nucleotides to the ends of RNA molecules by using nucleoside diphosphates as substrates, but this may not be physiologically important. Probably plays a role in initiation of 16S rRNA degradation (leading to ribosome degradation) during starvation. The polypeptide is Ribonuclease PH (Carboxydothermus hydrogenoformans (strain ATCC BAA-161 / DSM 6008 / Z-2901)).